Here is a 97-residue protein sequence, read N- to C-terminus: Co-chaperonin GroES (97 aa).

It belongs to the GroES chaperonin family. Heptamer of 7 subunits arranged in a ring. Interacts with the chaperonin GroEL.

It localises to the cytoplasm. In terms of biological role, together with the chaperonin GroEL, plays an essential role in assisting protein folding. The GroEL-GroES system forms a nano-cage that allows encapsulation of the non-native substrate proteins and provides a physical environment optimized to promote and accelerate protein folding. GroES binds to the apical surface of the GroEL ring, thereby capping the opening of the GroEL channel. The polypeptide is Co-chaperonin GroES (Pseudomonas entomophila (strain L48)).